Here is a 418-residue protein sequence, read N- to C-terminus: Tyrosine--tRNA ligase (418 aa).

Tyrosine 34 provides a ligand contact to L-tyrosine. Residues 39–48 (PTADSLHLGH) carry the 'HIGH' region motif. Residues tyrosine 169 and glutamine 173 each contribute to the L-tyrosine site. The 'KMSKS' region signature appears at 229-233 (KFGKS). Lysine 232 lines the ATP pocket. Positions 352-418 (LNIVDMLVTA…GKKKYAVLTY (67 aa)) constitute an S4 RNA-binding domain.

It belongs to the class-I aminoacyl-tRNA synthetase family. TyrS type 1 subfamily. In terms of assembly, homodimer.

It localises to the cytoplasm. It carries out the reaction tRNA(Tyr) + L-tyrosine + ATP = L-tyrosyl-tRNA(Tyr) + AMP + diphosphate + H(+). Catalyzes the attachment of tyrosine to tRNA(Tyr) in a two-step reaction: tyrosine is first activated by ATP to form Tyr-AMP and then transferred to the acceptor end of tRNA(Tyr). This chain is Tyrosine--tRNA ligase, found in Streptococcus equi subsp. zooepidemicus (strain MGCS10565).